The sequence spans 562 residues: MELAVGAGGMRRSASHTSLSESDDFDLSRLLNKPRINVERQRSFDDRSLSDVSYSGGGHGGTRGGFDGMYSPGGGLRSLVGTPASSALHSFEPHPIVGDAWEALRRSLVFFRGQPLGTIAAFDHASEEVLNYDQVFVRDFVPSALAFLMNGEPEIVRHFLLKTLLLQGWEKKVDRFKLGEGAMPASFKVLHDSKKGVDTLHADFGESAIGRVAPVDSGFWWIILLRAYTKSTGDLTLAETPECQKGMRLILSLCLSEGFDTFPTLLCADGCCMIDRRMGVYGYPIEIQALFFMALRCALQLLKHDNEGKEFVERIATRLHALSYHMRSYYWLDFQQLNDIYRYKTEEYSHTAVNKFNVIPDSIPDWLFDFMPCQGGFFIGNVSPARMDFRWFALGNMIAILSSLATPEQSTAIMDLIEERWEELIGEMPLKICYPAIENHEWRIVTGCDPKNTRWSYHNGGSWPVLLWLLTAACIKTGRPQIARRAIDLAERRLLKDGWPEYYDGKLGRYVGKQARKFQTWSIAGYLVAKMMLEDPSHLGMISLEEDKAMKPVLKRSASWTN.

It belongs to the glycosyl hydrolase 100 family.

Its subcellular location is the cytoplasm. The protein resides in the cytosol. It carries out the reaction Hydrolysis of terminal non-reducing beta-D-fructofuranoside residues in beta-D-fructofuranosides.. Its function is as follows. Cytosolic invertase that cleaves sucrose into glucose and fructose and is involved in the regulation of primary root elongation, lateral root formation, floral transition and pollen development. The protein is Cytosolic invertase 1 of Oryza sativa subsp. japonica (Rice).